A 174-amino-acid chain; its full sequence is Co-chaperone protein HscB homolog (174 aa).

The J domain maps to 2–74 (NYFELFKFPP…IRRAEHMLSL (73 aa)).

This sequence belongs to the HscB family. In terms of assembly, interacts with HscA and stimulates its ATPase activity.

Its function is as follows. Co-chaperone involved in the maturation of iron-sulfur cluster-containing proteins. Seems to help targeting proteins to be folded toward HscA. This is Co-chaperone protein HscB homolog from Shewanella baltica (strain OS195).